We begin with the raw amino-acid sequence, 358 residues long: MAQQRGVNSLQFNQDQSCFCCAMETGVRIYNVEPLMEKGHLDHEQVGSIALCSMLHRSNLLAVVGGGVNPKFSEISVLIWDDAREVRDPKDKLVLEFTFTKPVLAVRMRHDKIIIILKNRIYVYSFPDNPVKLFEFDTRDNPKGLCDLCPSLEKQLLVFPGHKCGSLQLVDLSNTKPGTSSAPFTINAHQSEIACLALNQPGSVVASASRKGTLIRLFDTTTRDKLVELRRGTDPATLYCINFSHDSSFLCASSDKGTVHIFALKDTKLNRRSALARVGKVGPVIGQYVDSQWSLANFTVPAECACICAFGKNTSKNVNSVIAICVDGTFHKYVFTPDGNCNREAFDVYLDICDDDDF.

2 WD repeats span residues 2 to 40 (AQQRGVNSLQFNQDQSCFCCAMETGVRIYNVEPLMEKGH) and 188 to 228 (AHQS…KLVE). The short motif at 229–232 (LRRG) is the L/FRRG motif element. A WD 3 repeat occupies 233–272 (TDPATLYCINFSHDSSFLCASSDKGTVHIFALKDTKLNRR).

The protein belongs to the WD repeat PROPPIN family.

The protein resides in the preautophagosomal structure. Component of the autophagy machinery that controls the major intracellular degradation process by which cytoplasmic materials are packaged into autophagosomes and delivered to lysosomes for degradation. Binds phosphatidylinositol 3-phosphate (PtdIns3P). The chain is WD repeat domain phosphoinositide-interacting protein 4 (wdr45) from Danio rerio (Zebrafish).